The chain runs to 138 residues: Large ribosomal subunit protein bL19 (138 aa).

Belongs to the bacterial ribosomal protein bL19 family.

Functionally, this protein is located at the 30S-50S ribosomal subunit interface and may play a role in the structure and function of the aminoacyl-tRNA binding site. The sequence is that of Large ribosomal subunit protein bL19 from Rickettsia peacockii (strain Rustic).